Consider the following 462-residue polypeptide: Chitinase 1 (462 aa).

The first 17 residues, methionine 1 to alanine 17, serve as a signal peptide directing secretion. One can recognise a GH18 domain in the interval serine 18 to serine 291. An N-linked (GlcNAc...) asparagine glycan is attached at asparagine 57. Glutamate 147 (proton donor) is an active-site residue.

This sequence belongs to the glycosyl hydrolase 18 family. Chitinase class III subfamily.

It is found in the secreted. It carries out the reaction Random endo-hydrolysis of N-acetyl-beta-D-glucosaminide (1-&gt;4)-beta-linkages in chitin and chitodextrins.. The polypeptide is Chitinase 1 (CHT1) (Candida albicans (Yeast)).